A 422-amino-acid chain; its full sequence is MFDKTQTIADFDPDVWQAIVDEGVRQEEHIELIASENYTSPLVMVAQGSKLTNKYAEGYPSKRYYGGCEYVDKVEELAIERAKALFGADYANVQPHSGSQANSAVYAALCAPGDTVLGMSLDHGGHLTHGAKVNFSGKMYNAVQYGLNPETGLVDYEEIAALAREHKPKMIVAGFSAYSQVLDWQKFRDIADEVGAYLMVDMAHVAGLVAAGVYPSPVQIADVTTTTTHKTLRGPRGGIILAKANPEIEKKLNSAVFPGGQGGPLMHVIAGKAISFKEAMSDEYKAYQQRVVDNAKTMAATFIKRGFKIVSGGTENHLMLVDLIGKDYSGKDADAALGAANITVNKNAVPNDPRSPFVTSGLRVGTPAITTRGFGETEVVDLTNWMCDVLESLEAGNSEAVIADVKAKVLDVCGKFPVYGSN.

Residues leucine 121 and 125–127 each bind (6S)-5,6,7,8-tetrahydrofolate; that span reads GHL. Lysine 230 is modified (N6-(pyridoxal phosphate)lysine). Position 355–357 (355–357) interacts with (6S)-5,6,7,8-tetrahydrofolate; the sequence is SPF.

This sequence belongs to the SHMT family. As to quaternary structure, homodimer. Pyridoxal 5'-phosphate serves as cofactor.

Its subcellular location is the cytoplasm. The catalysed reaction is (6R)-5,10-methylene-5,6,7,8-tetrahydrofolate + glycine + H2O = (6S)-5,6,7,8-tetrahydrofolate + L-serine. The protein operates within one-carbon metabolism; tetrahydrofolate interconversion. It functions in the pathway amino-acid biosynthesis; glycine biosynthesis; glycine from L-serine: step 1/1. Its function is as follows. Catalyzes the reversible interconversion of serine and glycine with tetrahydrofolate (THF) serving as the one-carbon carrier. This reaction serves as the major source of one-carbon groups required for the biosynthesis of purines, thymidylate, methionine, and other important biomolecules. Also exhibits THF-independent aldolase activity toward beta-hydroxyamino acids, producing glycine and aldehydes, via a retro-aldol mechanism. This Teredinibacter turnerae (strain ATCC 39867 / T7901) protein is Serine hydroxymethyltransferase.